Reading from the N-terminus, the 208-residue chain is Uracil phosphoribosyltransferase (208 aa).

5-phospho-alpha-D-ribose 1-diphosphate is bound by residues R78, R103, and 130-138 (DPMLATGGS). Residues I193 and 198–200 (GDA) contribute to the uracil site. A 5-phospho-alpha-D-ribose 1-diphosphate-binding site is contributed by D199.

This sequence belongs to the UPRTase family. The cofactor is Mg(2+).

It catalyses the reaction UMP + diphosphate = 5-phospho-alpha-D-ribose 1-diphosphate + uracil. The protein operates within pyrimidine metabolism; UMP biosynthesis via salvage pathway; UMP from uracil: step 1/1. With respect to regulation, allosterically activated by GTP. Catalyzes the conversion of uracil and 5-phospho-alpha-D-ribose 1-diphosphate (PRPP) to UMP and diphosphate. This is Uracil phosphoribosyltransferase from Shewanella amazonensis (strain ATCC BAA-1098 / SB2B).